Reading from the N-terminus, the 348-residue chain is Fructose-1,6-bisphosphatase class 1 (348 aa).

4 residues coordinate Mg(2+): Glu-92, Asp-111, Leu-113, and Asp-114. Substrate-binding positions include 114 to 117 and Asn-204; that span reads DGSS. Position 276 (Glu-276) interacts with Mg(2+).

The protein belongs to the FBPase class 1 family. In terms of assembly, homotetramer. The cofactor is Mg(2+).

The protein resides in the cytoplasm. It carries out the reaction beta-D-fructose 1,6-bisphosphate + H2O = beta-D-fructose 6-phosphate + phosphate. Its pathway is carbohydrate biosynthesis; gluconeogenesis. The polypeptide is Fructose-1,6-bisphosphatase class 1 (Methylorubrum populi (strain ATCC BAA-705 / NCIMB 13946 / BJ001) (Methylobacterium populi)).